We begin with the raw amino-acid sequence, 723 residues long: Dipeptidyl aminopeptidase BI (723 aa).

Positions 1-23 (MKPTSLLLAATVLMSTPITSALA) are cleaved as a signal peptide. Residues serine 574, aspartate 659, and histidine 694 each act as charge relay system in the active site.

Belongs to the peptidase S9A family. In terms of assembly, monomer.

With respect to regulation, nearly completely inhibited by 0.5 mM ZnCl(2), 0.1 mM N-tosyl-L-lysyl chloromethyl ketone (TLCK) and 0.1 mM leupeptin. Strongly inhibited by 0.5 mM CoCl(2) and 0.1 mM chymostatin. Activity is hardly affected by general serine protease inhibitors phenylmethanesulfonyl fluoride (PMSF), diisopropyl fluorophosphate (DFP) and N-tosyl-L-phenyl-alanyl chloromethyl ketone (TPCK) or by aspartyl protease inhibitor pepstatin A or by CaCl(2) and EDTA. Cysteine protease inhibitors, such as N-ethylmaleimide (NEM), iodoacetic acid and L-trans-epoxysuccinyl-leucylamido(4-guanido)butane (E-64) have no effect on activity. Its function is as follows. Sequentially removes dipeptide units (NH3-P2-P1-) from the amino termini of peptides and proteins. Is able to catalyze the removal of Asp-Arg from the amino termini of angiotensins I and II. Has slight endopeptidase activity on N-terminally blocked peptide derivatives which contain arginine residues at the P1 position. Does not hydrolyze Ala-Ala-Ala and Ala-Ala-Ala-Ala substrates or insulin beta chain. The sequence is that of Dipeptidyl aminopeptidase BI from Pseudoxanthomonas mexicana.